A 121-amino-acid chain; its full sequence is ATP synthase epsilon chain (121 aa).

The protein belongs to the ATPase epsilon chain family. In terms of assembly, F-type ATPases have 2 components, CF(1) - the catalytic core - and CF(0) - the membrane proton channel. CF(1) has five subunits: alpha(3), beta(3), gamma(1), delta(1), epsilon(1). CF(0) has three main subunits: a, b and c.

The protein resides in the cell membrane. Produces ATP from ADP in the presence of a proton gradient across the membrane. This Mycobacterium marinum (strain ATCC BAA-535 / M) protein is ATP synthase epsilon chain.